Reading from the N-terminus, the 70-residue chain is Small ribosomal subunit protein bS21 (70 aa).

The protein belongs to the bacterial ribosomal protein bS21 family.

In Laribacter hongkongensis (strain HLHK9), this protein is Small ribosomal subunit protein bS21.